Consider the following 144-residue polypeptide: MEVIVKKVGELKVGNYIYNEQDGEVYKIVSIETSKPGKHGSAKARIEAISVTSGKKIVIIKPTSDPIKVPQIKKIKGQIIATEKRKVPSPQGEVEEVVAQVMDLETYEVIEAKVPEELKDKVEPGANVIVWDLGVPVVMQVFKQ.

K38 carries the post-translational modification Hypusine.

The protein belongs to the eIF-5A family.

The protein resides in the cytoplasm. Functions by promoting the formation of the first peptide bond. The polypeptide is Translation initiation factor 5A (Nanoarchaeum equitans (strain Kin4-M)).